The chain runs to 436 residues: UPF0597 protein YhaM (436 aa).

This sequence belongs to the UPF0597 family.

The protein is UPF0597 protein YhaM of Salmonella paratyphi B (strain ATCC BAA-1250 / SPB7).